The chain runs to 271 residues: (+)-cis,trans-nepetalactol synthase NEPS1 (271 aa).

Residues Gly24–Gly30, Asp49–Gln51, Asp72–Val73, and Asn99 contribute to the NAD(+) site. Residues Thr154 and Tyr167 each coordinate substrate. NAD(+) contacts are provided by residues Tyr167, Lys171, and Val200–Ala205. The active-site Proton acceptor is Tyr167.

The protein belongs to the short-chain dehydrogenases/reductases (SDR) family.

The enzyme catalyses (S)-8-oxocitronellyl enol = cis-trans-nepetalactol. It carries out the reaction cis-cis-nepetalactol + NAD(+) = cis-cis-nepetalactone + NADH + H(+). The catalysed reaction is cis-trans-nepetalactol + NAD(+) = cis-trans-nepetalactone + NADH + H(+). Bifunctional enzyme that possesses cyclase and dehydrogenase activities. Functions as a non-oxidoreductive cyclase to promote the formation of cis-trans-nepetalactol. Functions as dehydrogenase to oxidize cis-cis-nepetalactol and cis-trans-nepetalactol into nepetalactones, metabolites that are both insect-repellent and have euphoric effect in cats. Binds NAD(+) as classical short-chain dehydrogenase/reductase (SDR), but does not utilize it for its redox-neutral cyclase activity. This chain is (+)-cis,trans-nepetalactol synthase NEPS1, found in Nepeta racemosa (Catmint).